Reading from the N-terminus, the 157-residue chain is Protein MG115 homolog (157 aa).

The protein belongs to the CinA family.

In Mycoplasma pneumoniae (strain ATCC 29342 / M129 / Subtype 1) (Mycoplasmoides pneumoniae), this protein is Protein MG115 homolog.